Reading from the N-terminus, the 409-residue chain is Multidrug efflux pump Tap (409 aa).

Transmembrane regions (helical) follow at residues 10-30, 46-66, 80-98, 104-123, 144-168, 174-193, 218-240, 260-282, 289-308, 313-335, 348-370, and 375-397; these read LLILFAALTAGAGNGITIVAF, IVAMAGTLPLLVATLIAGAAV, LLSALSVAAVPVLALIFGV, AVLAVLAGLGAFFDPAGMTA, SVYEAVFNLGYIVGPGIGGLMIATL, MWVTAGAFCCSILAISVLRL, FVWYTPVLRTLAIVDLVATGLYM, LGWVLMALSIGGLLGALGYAVMS, ATMLTAVITLGVAMTVIAFL, LILVLCAIVGFVYGPIAPIYNYV, VVGVMGSLAYAAGPLGLILAGPL, and GLHATFLALSLPMLLLGVVAVFL.

It belongs to the major facilitator superfamily. Drug:H(+) antiporter-3 (DHA3) (TC 2.A.1.21) family.

The protein resides in the cell inner membrane. Efflux activity is inhibited by carbonyl cyanide m-chlorophenylhydrazone (CCCP) and reserpine, but not by o-vanadate or chlorpromazine (CPZ). In terms of biological role, efflux pump that contributes to intrinsic antibiotic resistance. The pump uses the electrochemical gradient as a source of energy. Confers low-level resistance to tetracycline and to several aminoglycosides, including streptomycin, gentamicin, 2'-N-ethylnetilmicin and 6'-N-ethylnetilmicin. The sequence is that of Multidrug efflux pump Tap from Mycolicibacterium fortuitum (Mycobacterium fortuitum).